A 514-amino-acid chain; its full sequence is Membrane-bound lytic murein transglycosylase F (514 aa).

Positions 1–30 are cleaved as a signal peptide; sequence MKKLKINYLFIGILTLLLAAALWPSIPWFG. Positions 31–269 are non-LT domain; it reads KTENHVAAIQ…RIEEKYLGHG (239 aa). Residues 270-514 are LT domain; sequence DDFDYVDTRS…LFTPQKKEEK (245 aa). The active site involves E314.

This sequence in the N-terminal section; belongs to the bacterial solute-binding protein 3 family. It in the C-terminal section; belongs to the transglycosylase Slt family.

Its subcellular location is the cell outer membrane. The catalysed reaction is Exolytic cleavage of the (1-&gt;4)-beta-glycosidic linkage between N-acetylmuramic acid (MurNAc) and N-acetylglucosamine (GlcNAc) residues in peptidoglycan, from either the reducing or the non-reducing ends of the peptidoglycan chains, with concomitant formation of a 1,6-anhydrobond in the MurNAc residue.. Its function is as follows. Murein-degrading enzyme that degrades murein glycan strands and insoluble, high-molecular weight murein sacculi, with the concomitant formation of a 1,6-anhydromuramoyl product. Lytic transglycosylases (LTs) play an integral role in the metabolism of the peptidoglycan (PG) sacculus. Their lytic action creates space within the PG sacculus to allow for its expansion as well as for the insertion of various structures such as secretion systems and flagella. This Salmonella arizonae (strain ATCC BAA-731 / CDC346-86 / RSK2980) protein is Membrane-bound lytic murein transglycosylase F.